Reading from the N-terminus, the 128-residue chain is MNISEAAKLVGLSTKQIRDYEKMGLIKPAVRSLSGYRNYGESDLERLHFIRHSRNVGFSLHQIAQLLALQDNPKRSCREVKVLTAQHIATLNQQIEQLQKMVQKLQHWHDSCQGNDNPECLILNGLNG.

In terms of domain architecture, HTH merR-type spans methionine 1 to leucine 69. A DNA-binding region (H-T-H motif) is located at residues serine 4–methionine 23.

Its subcellular location is the cytoplasm. Its function is as follows. Could be a copper-dependent transcriptional activator of the ATPase HI_0290. The sequence is that of Probable heavy metal-dependent transcriptional regulator HI_0293 from Haemophilus influenzae (strain ATCC 51907 / DSM 11121 / KW20 / Rd).